A 130-amino-acid polypeptide reads, in one-letter code: Small ribosomal subunit protein uS8 (130 aa).

Belongs to the universal ribosomal protein uS8 family. In terms of assembly, part of the 30S ribosomal subunit. Contacts proteins S5 and S12.

One of the primary rRNA binding proteins, it binds directly to 16S rRNA central domain where it helps coordinate assembly of the platform of the 30S subunit. The protein is Small ribosomal subunit protein uS8 of Shewanella pealeana (strain ATCC 700345 / ANG-SQ1).